Consider the following 431-residue polypeptide: Trigger factor (431 aa).

Residues G158–L243 enclose the PPIase FKBP-type domain.

Belongs to the FKBP-type PPIase family. Tig subfamily.

The protein resides in the cytoplasm. It catalyses the reaction [protein]-peptidylproline (omega=180) = [protein]-peptidylproline (omega=0). In terms of biological role, involved in protein export. Acts as a chaperone by maintaining the newly synthesized protein in an open conformation. Functions as a peptidyl-prolyl cis-trans isomerase. The sequence is that of Trigger factor from Xylella fastidiosa (strain M23).